We begin with the raw amino-acid sequence, 469 residues long: ATP synthase subunit beta (469 aa).

Glycine 156–threonine 163 is an ATP binding site.

Belongs to the ATPase alpha/beta chains family. As to quaternary structure, F-type ATPases have 2 components, CF(1) - the catalytic core - and CF(0) - the membrane proton channel. CF(1) has five subunits: alpha(3), beta(3), gamma(1), delta(1), epsilon(1). CF(0) has three main subunits: a(1), b(2) and c(9-12). The alpha and beta chains form an alternating ring which encloses part of the gamma chain. CF(1) is attached to CF(0) by a central stalk formed by the gamma and epsilon chains, while a peripheral stalk is formed by the delta and b chains.

It is found in the cell membrane. It catalyses the reaction ATP + H2O + 4 H(+)(in) = ADP + phosphate + 5 H(+)(out). In terms of biological role, produces ATP from ADP in the presence of a proton gradient across the membrane. The catalytic sites are hosted primarily by the beta subunits. The polypeptide is ATP synthase subunit beta (Lactococcus lactis subsp. lactis (strain IL1403) (Streptococcus lactis)).